Consider the following 448-residue polypeptide: MYVEKILQSLQKKYPYQKEFHQAVYEAITSLKPLLDSDKSYEKHAVLERLIEPEREIFFRVCWLDDNHQIQVNRGCRVEFNSAIGPYKGGLRFHPSVNESVIKFLGFEQVLKNSLTTLAMGGAKGGSDFDPKEKSEHEIMRFCQAFMNELYRHIGATTDVPAGDIGVGEREIGYLFGQYKKLVNRFEGVLTGKGLTYGGSLCRKEATGYGCVYFAEEMLQERNSSLEGKVCSVSGSGNVAIYTIEKLLQIGAKPVTASDSNGMIYDKDGIDLELLKEIKEARRGRIKEYALEKTSAKYTPTENYPKGGNAIWHVPCFAAFPSATENELSVLDAKTLLSNGCKCVAEGANMPSSNEAIELFLQAKISYGIGKAANAGGVSVSGLEMAQNASMHPWSFEVVDAKLHHIMKEIYKNVSQTAKEFKDPTNFVLGANIAGFRKVASAMIAQGV.

Residues Lys88, Gln109, and Lys112 each coordinate substrate. Lys124 functions as the Proton donor in the catalytic mechanism. Residue Gly163 coordinates substrate. NADP(+) contacts are provided by Thr207 and Asn238. Ser381 contributes to the substrate binding site.

This sequence belongs to the Glu/Leu/Phe/Val dehydrogenases family. Homohexamer.

It carries out the reaction L-glutamate + NADP(+) + H2O = 2-oxoglutarate + NH4(+) + NADPH + H(+). In terms of biological role, catalyzes the reversible oxidative deamination of glutamate to alpha-ketoglutarate and ammonia. The sequence is that of NADP-specific glutamate dehydrogenase (gdhA) from Helicobacter pylori (strain J99 / ATCC 700824) (Campylobacter pylori J99).